The chain runs to 982 residues: Little elongation complex subunit 2 (982 aa).

Phosphoserine occurs at positions 17 and 326. Positions 410-427 (TTKVSKSPSPASTSTVPN) are enriched in polar residues. Disordered regions lie at residues 410-450 (TTKV…PDIS) and 473-504 (GMDG…PLIQ). A compositionally biased stretch (basic and acidic residues) spans 479–497 (EECKNKDDQGFESCEKVSN). Serine 571 is subject to Phosphoserine. Threonine 573 is modified (phosphothreonine). 3 disordered regions span residues 595–623 (VGSN…NTAC), 672–697 (ENSK…KSGW), and 930–982 (PKSL…RKIT). A compositionally biased stretch (low complexity) spans 597–610 (SNLSSRPASPNSSS). 2 stretches are compositionally biased toward polar residues: residues 611 to 623 (GQAS…NTAC) and 672 to 683 (ENSKQPSVSEQL). The span at 684-697 (SGPSDSSSWPKSGW) shows a compositional bias: low complexity. The span at 956-970 (SMETKSSCLPAQQVE) shows a compositional bias: polar residues.

This sequence belongs to the ICE2 family. Component of the little elongation complex (LEC), at least composed of ELL (ELL, ELL2 or ELL3), ZC3H8, ICE1 and ICE2. Interacts with ICE1 (via C-terminus domain). Interacts with ELL. Expressed at low levels in lung and testis.

It is found in the nucleus. Functionally, component of the little elongation complex (LEC), a complex required to regulate small nuclear RNA (snRNA) gene transcription by RNA polymerase II and III. This Homo sapiens (Human) protein is Little elongation complex subunit 2 (ICE2).